The primary structure comprises 648 residues: ABC transporter G family member 14 (648 aa).

Residues 53–304 (LKFEEVVYKV…FSSLGFSTSL (252 aa)) form the ABC transporter domain. Residue 99–106 (GPSGSGKT) coordinates ATP. Residue asparagine 346 is glycosylated (N-linked (GlcNAc...) asparagine). Residues 384 to 590 (YQFTVLLQRG…CYKLLLGIQY (207 aa)) enclose the ABC transmembrane type-2 domain. Transmembrane regions (helical) follow at residues 405-425 (LRIF…WHTP), 435-455 (LLFF…VFTF), 485-505 (LPLE…MGGL), 512-532 (FILS…LGLA), 543-562 (ATTL…GYYV), 569-591 (IVWL…IQYT), and 620-640 (LWID…MAYM).

It belongs to the ABC transporter superfamily. ABCG family. Eye pigment precursor importer (TC 3.A.1.204) subfamily. In terms of assembly, forms heterodimers with ABCG11. As to expression, accumulates primarily in the pericycle and stelar cells of roots. Expressed in leaves, stems, flowers and siliques, and, at low levels, in roots. Accumulates in the phloem.

The protein localises to the cell membrane. Positive regulator of plant growth which acts as an efflux pump involved in the major root-to-shoot (acropetal) long-distance cytokinin (CK) transport via the xylem sap. Together with ABCG9 and ABCG11, required for vascular development by regulating lipid/sterol homeostasis. Involved in CK-dependent responses to oxidative stress such as hydrogen peroxide H(2)O(2). Functionally, (Microbial infection) Required for SNC1-mediated defense response against the virulent pathogen Pseudomonas syringae pv. tomato DC3000 by promoting the accumulation of trans-zeatin (tZ)-type cytokinins (CK) in the shoot. The chain is ABC transporter G family member 14 from Arabidopsis thaliana (Mouse-ear cress).